The following is a 274-amino-acid chain: Large ribosomal subunit protein uL2 (274 aa).

Disordered stretches follow at residues 28–54 (APHA…TRHI) and 224–274 (VAMN…RRRK). Residues 263–274 (KRTDKMIVRRRK) are compositionally biased toward basic and acidic residues.

It belongs to the universal ribosomal protein uL2 family. In terms of assembly, part of the 50S ribosomal subunit. Forms a bridge to the 30S subunit in the 70S ribosome.

Functionally, one of the primary rRNA binding proteins. Required for association of the 30S and 50S subunits to form the 70S ribosome, for tRNA binding and peptide bond formation. It has been suggested to have peptidyltransferase activity; this is somewhat controversial. Makes several contacts with the 16S rRNA in the 70S ribosome. The protein is Large ribosomal subunit protein uL2 of Pseudomonas fluorescens (strain SBW25).